The primary structure comprises 181 residues: Transcriptional repressor NrdR (181 aa).

A zinc finger lies at 3–34; that stretch reads CPYCQHTDSRVLESRSTGAGRSIRRRRECLSC. Residues 49-139 enclose the ATP-cone domain; that stretch reads ISVIKRNGQS…VYRQFQGVDD (91 aa).

The protein belongs to the NrdR family. The cofactor is Zn(2+).

Its function is as follows. Negatively regulates transcription of bacterial ribonucleotide reductase nrd genes and operons by binding to NrdR-boxes. The chain is Transcriptional repressor NrdR from Picosynechococcus sp. (strain ATCC 27264 / PCC 7002 / PR-6) (Agmenellum quadruplicatum).